The following is a 438-amino-acid chain: Chromosomal replication initiator protein DnaA (438 aa).

Positions 1–74 are domain I, interacts with DnaA modulators; it reads MNEINKIWQK…SFYQITGSQV (74 aa). The domain II stretch occupies residues 74–100; that stretch reads VEVKYIITGKEHETGLIEEKKQVIKKG. A domain III, AAA+ region region spans residues 101–317; the sequence is NLNPKYTFDT…GSLIKLCAYT (217 aa). 4 residues coordinate ATP: G145, G147, K148, and T149. A domain IV, binds dsDNA region spans residues 318–438; that stretch reads SLTKVPISMD…DSIIKKVTGQ (121 aa).

Belongs to the DnaA family. Oligomerizes as a right-handed, spiral filament on DNA at oriC.

The protein resides in the cytoplasm. In terms of biological role, plays an essential role in the initiation and regulation of chromosomal replication. ATP-DnaA binds to the origin of replication (oriC) to initiate formation of the DNA replication initiation complex once per cell cycle. Binds the DnaA box (a 9 base pair repeat at the origin) and separates the double-stranded (ds)DNA. Forms a right-handed helical filament on oriC DNA; dsDNA binds to the exterior of the filament while single-stranded (ss)DNA is stabiized in the filament's interior. The ATP-DnaA-oriC complex binds and stabilizes one strand of the AT-rich DNA unwinding element (DUE), permitting loading of DNA polymerase. After initiation quickly degrades to an ADP-DnaA complex that is not apt for DNA replication. Binds acidic phospholipids. The protein is Chromosomal replication initiator protein DnaA of Thermodesulfovibrio yellowstonii (strain ATCC 51303 / DSM 11347 / YP87).